Reading from the N-terminus, the 286-residue chain is MLRSGVIAKKVGMTRLFMEDGKQIPVTVLQLDKLQVVAQRTSEKDGYSAVQLGAGTAKAKRTSQAMRGHFAAAKVEPKRKVAEFRVDPENLIGVGEEITANHYFEGQFVDVAGTSIGKGFAGAMKRHNFGGLRASHGVSISHRSHGSTGQCQDPGKVFKGKKMAGHMGAARVTTQNLQVVRTDANRGLIMVKGAVPGSKGGWVTVKDAVKKPFPENAILPAALKSAAEEAEKAAEAAAAAAAAEAEAAAAAAAAEEQAAMEAAEAAEAKTDTVAEAEAAEKKEGDA.

Residue Q152 is modified to N5-methylglutamine. A compositionally biased stretch (low complexity) spans 246-265; the sequence is EAAAAAAAAEEQAAMEAAEA. The disordered stretch occupies residues 246–286; that stretch reads EAAAAAAAAEEQAAMEAAEAAEAKTDTVAEAEAAEKKEGDA. A compositionally biased stretch (basic and acidic residues) spans 266-286; sequence AEAKTDTVAEAEAAEKKEGDA.

Belongs to the universal ribosomal protein uL3 family. As to quaternary structure, part of the 50S ribosomal subunit. Forms a cluster with proteins L14 and L19. Post-translationally, methylated by PrmB.

Functionally, one of the primary rRNA binding proteins, it binds directly near the 3'-end of the 23S rRNA, where it nucleates assembly of the 50S subunit. This chain is Large ribosomal subunit protein uL3, found in Roseobacter denitrificans (strain ATCC 33942 / OCh 114) (Erythrobacter sp. (strain OCh 114)).